Consider the following 153-residue polypeptide: MATVLDTPVAVRRAAMDLLARREHGRAELSRKLRQRGASAELIDPALDRLAEEGLLDESRYLESFIASRARSGHGPLRIREELAQRGLPRADIERALGACEVDWSAQLREVWRRKFARLPQDAREKAQQGRFLAYRGYSMESISRLLNSRSDD.

This sequence belongs to the RecX family.

The protein resides in the cytoplasm. Modulates RecA activity. This Pseudomonas aeruginosa (strain UCBPP-PA14) protein is Regulatory protein RecX.